The sequence spans 901 residues: Flowering time control protein FPA (901 aa).

3 RRM domains span residues 18-90 (NNLW…YARP), 95-166 (KSLW…FLRS), and 206-281 (KVLW…YSND). Residues 343 to 416 (VGKEPNWRRP…SVDGFTPMGV (74 aa)) form a disordered region. The 97-residue stretch at 441-537 (WRGMIAKGGT…DDGTTLFLVP (97 aa)) folds into the SPOC domain. Residues 655–736 (SQPAAPESHQ…YPPASNNPNY (82 aa)) form a disordered region. 2 stretches are compositionally biased toward polar residues: residues 664–682 (QPMSGPSTVVSTAHQSNGL) and 700–716 (HDASNQSFQQYGNQYTP).

This sequence belongs to the RRM Spen family. As to expression, expressed in roots, leaves, stems and flowers. Highest expression in flower stems and meristematic regions.

It localises to the nucleus. Functionally, plays a role in the regulation of flowering time in the autonomous flowering pathway by decreasing FLOWERING LOCUS C mRNA levels. Required for RNA-mediated chromatin silencing of a range of loci in the genome. Cotranscriptionally recognizes aberrant RNA and marks it for silencing. Controls alternative cleavage and polyadenylation on pre-mRNAs and antisense RNAs. Acts redundantly with FCA to prevent the expression of distally polyadenylated antisense RNAs at the FLC locus. The polypeptide is Flowering time control protein FPA (FPA) (Arabidopsis thaliana (Mouse-ear cress)).